Reading from the N-terminus, the 682-residue chain is MDLFQSPGGDLIQDEDSVEVIEMLCIDFRDRLLVALSTTCQSDFREAKKVVEERLRDILETASSLSSTEVTSSPNASPLYNTDAPEDVVPTVGLDVGLDEPMADYSQNTPSITGGTASAEYQNSGDTNQMTLEDPACVDMFAAESQNTGHIPDSCLRDWSFEGVSMKSPSLFDWSSRNSNFPLTQEHENQFAEFLTLFEGEPNFDNWLSTMTWSSLESHSSPINGHSAGATPQLDQMHTVSNSRVARSVVSESTVTNTGSANSLNSGLLANTPSSSHSSVFERACSSVQEPTPEPTPVRGLQRKLRKQGPRQTTEATPCDQQIGPRASRATSQLPERRSMKMVRKEARDTPLTTSPANSTQINIEANTIPSDLSVEYAFGCFSDAKEVFETFYKRLSDDRKHLSSLLMRLFYAVGSPDALRQLRDALDLSRKNSMIASYHDSNDLAATVSVLDQLDATTTLSHILRRYHLVRLLDHRSKLESNHKAAKLAVKGTKRRLKYDCERIELMRRGENADCDANTRSAKERLKYRSKTRALTDLMQTLYPDLSPDSEGITTAGGCEYTRKLTKLRNRLACARNWYQFEETFPGAILALIPCATGDLSISIDHVEKLPSDVLKIFLDYLKERRGVFLSKMSRILSKDLYDVLMRRNVTKRYKLEQTNENSLTDGLHDDDRLLELCETV.

The segment covering 63 to 73 (SSLSSTEVTSS) has biased composition (low complexity). 3 disordered regions span residues 63-86 (SSLS…DAPE), 107-129 (QNTP…DTNQ), and 251-358 (SEST…SPAN). Polar residues-rich tracts occupy residues 257-279 (NTGS…SHSS) and 310-320 (PRQTTEATPCD). The span at 335-349 (PERRSMKMVRKEARD) shows a compositional bias: basic and acidic residues.

Part of the gene cluster that mediates the biosynthesis of pneumocandins, lipohexapeptides of the echinocandin family that prevent fungal cell wall formation by non-competitive inhibition of beta-1,3-glucan synthase. The 10,12-dimethylmyristoyl side chain is synthesized by the reducing polyketide synthase gloL/GLPKS4. The thioesterase gloN/GLHYD exclusively interacts with gloL/GLPKS4 to maintain turnover of the polyketide side chain. The 10R,12S-dimethylmyristic acid is then transferred to the first thiolation domain of the nonribosomal peptide synthetase gloA/GLNRPS4 by the acyl-AMP ligase gloD/GLligase, followed by its acylation to L-ornithine to trigger elongation of the cyclic hexapeptide. L-ornithine, 4R-hydroxyl-L-proline (generated from L-proline by the dioxygenase gloF/GLOXY2), 3S-hydroxyl-L-homotyrosine (generated by gloG/GLHtyB, gloH/GLHtyA, gloI/GLHtyC, gloJ/GLHtyD and hydroxylated at C-3 by the dioxygenase gloM/GLOXY1), 3R-hydroxyl-L-glutamine (generated from L-glutamine probably by the dioxygenase gloE/GLOXY3) and 3S-hydroxyl-L-proline (generated from L-proline by the dioxygenase gloF/GLOXY2 to yield pneumocandin B0), or 3S-hydroxyl-4S-methyl-L-proline (generated from L-leucine by the dioxygenase gloC/GLOXY4 to yield pneumocandin A0) are sequentially added to the growing chain. The last C domain of gloA/GLNRPS4 is proposed to be responsible for cyclization by condensation to form the peptide bond between L-ornithine and 3S-hydroxyl-4S-methyl-L-proline (for pneumocandin A0) or 3S-hydroxyl-L-proline (for pneumocandin B0). Finally, the subsequent C-4 hydroxylation of 3S-hydroxyl-L-homotyrosine and L-ornithine dihydroxylation at C-4 and C-5 are performed by the cytochrome P450 monooxygenases gloP/GLP450-1 and gloO/GLP450-2, respectively. The chain is Pneumocandin biosynthesis cluster protein B from Glarea lozoyensis (strain ATCC 20868 / MF5171).